The sequence spans 56 residues: Large ribosomal subunit protein bL33 (56 aa).

Belongs to the bacterial ribosomal protein bL33 family.

The sequence is that of Large ribosomal subunit protein bL33 from Campylobacter hominis (strain ATCC BAA-381 / DSM 21671 / CCUG 45161 / LMG 19568 / NCTC 13146 / CH001A).